Reading from the N-terminus, the 337-residue chain is Casein kinase I isoform alpha-like (337 aa).

The residue at position 8 (K8) is an N6-acetyllysine. A Protein kinase domain is found at 17-285 (YKLVRKIGSG…YLRQLFRILF (269 aa)). Residues 23–31 (IGSGSFGDV) and K46 each bind ATP. The active-site Proton acceptor is D136. Residues 309-325 (AASSSGQGQQAQTQTGK) show a composition bias toward low complexity. Positions 309 to 337 (AASSSGQGQQAQTQTGKQTEKNKNNVKDN) are disordered. The segment covering 326-337 (QTEKNKNNVKDN) has biased composition (basic and acidic residues).

Belongs to the protein kinase superfamily. CK1 Ser/Thr protein kinase family. Casein kinase I subfamily. In terms of assembly, interacts with FAM83A, FAM83B, FAM83C, FAM83D, FAM83E, FAM83F, FAM83G and FAM83H (via DUF1669).

Its subcellular location is the cytoplasm. It catalyses the reaction L-seryl-[protein] + ATP = O-phospho-L-seryl-[protein] + ADP + H(+). The catalysed reaction is L-threonyl-[protein] + ATP = O-phospho-L-threonyl-[protein] + ADP + H(+). Casein kinases are operationally defined by their preferential utilization of acidic proteins such as caseins as substrates. It can phosphorylate a large number of proteins. Participates in Wnt signaling. In Homo sapiens (Human), this protein is Casein kinase I isoform alpha-like (CSNK1A1L).